The primary structure comprises 212 residues: Probable GTP-binding protein EngB (212 aa).

The 173-residue stretch at 38–210 folds into the EngB-type G domain; sequence SLPEIAFVGK…KASLAKCIKP (173 aa). Residues 46–53, 73–77, 91–94, 158–161, and 189–191 contribute to the GTP site; these read GKSNVGKS, GRTRQ, DLPG, TKSD, and VSS. Residues S53 and T75 each contribute to the Mg(2+) site.

The protein belongs to the TRAFAC class TrmE-Era-EngA-EngB-Septin-like GTPase superfamily. EngB GTPase family. Mg(2+) serves as cofactor.

In terms of biological role, necessary for normal cell division and for the maintenance of normal septation. This is Probable GTP-binding protein EngB from Rickettsia felis (strain ATCC VR-1525 / URRWXCal2) (Rickettsia azadi).